The chain runs to 260 residues: Thiamine thiazole synthase (260 aa).

NAD(+) is bound by residues Ser-41, 60–61, Gly-68, Val-131, and 159–161; these read ER and HVD. The Fe cation site is built by Asp-161 and His-176. Met-225 contacts NAD(+). Arg-235 provides a ligand contact to glycine.

This sequence belongs to the THI4 family. Homooctamer; tetramer of dimers. It depends on Fe(2+) as a cofactor.

It carries out the reaction hydrogen sulfide + glycine + NAD(+) = ADP-5-ethyl-4-methylthiazole-2-carboxylate + nicotinamide + 3 H2O + H(+). It functions in the pathway cofactor biosynthesis; thiamine diphosphate biosynthesis. Its function is as follows. Involved in the biosynthesis of the thiazole moiety of thiamine. Catalyzes the conversion of NAD and glycine to adenosine diphosphate 5-(2-hydroxyethyl)-4-methylthiazole-2-carboxylate (ADT), an adenylated thiazole intermediate, using free sulfide as a source of sulfur. In Archaeoglobus fulgidus (strain ATCC 49558 / DSM 4304 / JCM 9628 / NBRC 100126 / VC-16), this protein is Thiamine thiazole synthase.